The primary structure comprises 150 residues: 6,7-dimethyl-8-ribityllumazine synthase (150 aa).

5-amino-6-(D-ribitylamino)uracil is bound by residues phenylalanine 11, 43–45, and 67–69; these read TYE and AVI. 72–73 contacts (2S)-2-hydroxy-3-oxobutyl phosphate; the sequence is AT. Histidine 75 (proton donor) is an active-site residue. 5-amino-6-(D-ribitylamino)uracil is bound at residue leucine 100. A (2S)-2-hydroxy-3-oxobutyl phosphate-binding site is contributed by arginine 115.

This sequence belongs to the DMRL synthase family.

It carries out the reaction (2S)-2-hydroxy-3-oxobutyl phosphate + 5-amino-6-(D-ribitylamino)uracil = 6,7-dimethyl-8-(1-D-ribityl)lumazine + phosphate + 2 H2O + H(+). It participates in cofactor biosynthesis; riboflavin biosynthesis; riboflavin from 2-hydroxy-3-oxobutyl phosphate and 5-amino-6-(D-ribitylamino)uracil: step 1/2. Its function is as follows. Catalyzes the formation of 6,7-dimethyl-8-ribityllumazine by condensation of 5-amino-6-(D-ribitylamino)uracil with 3,4-dihydroxy-2-butanone 4-phosphate. This is the penultimate step in the biosynthesis of riboflavin. This chain is 6,7-dimethyl-8-ribityllumazine synthase, found in Staphylothermus marinus (strain ATCC 43588 / DSM 3639 / JCM 9404 / F1).